The following is a 106-amino-acid chain: Nucleoid-associated protein RPA0616 (106 aa).

This sequence belongs to the YbaB/EbfC family. Homodimer.

It localises to the cytoplasm. The protein localises to the nucleoid. Functionally, binds to DNA and alters its conformation. May be involved in regulation of gene expression, nucleoid organization and DNA protection. This is Nucleoid-associated protein RPA0616 from Rhodopseudomonas palustris (strain ATCC BAA-98 / CGA009).